The chain runs to 571 residues: Isthmin-2 (571 aa).

Positions 1-26 (MRALRDRAGLLLCVLLLAALLEAALG) are cleaved as a signal peptide. 3 disordered regions span residues 30–60 (KKPR…LKEE), 116–141 (ANTT…LREE), and 257–294 (EKDR…DEEE). The span at 116–131 (ANTTLSTPNPDTQASA) shows a compositional bias: polar residues. Asn-117 carries an N-linked (GlcNAc...) asparagine glycan. Basic and acidic residues predominate over residues 257-268 (EKDRAPGEKGEE). Acidic residues predominate over residues 269 to 294 (KEEDEDYPSEDIEGEDQEDKEEDEEE). The N-linked (GlcNAc...) asparagine glycan is linked to Asn-300. The TSP type-1 domain maps to 327–371 (EPQKEWSPWSPCSGNCSTGKQQRTRPCGYGCTATETRTCDLPSCP). Cystine bridges form between Cys-338–Cys-365, Cys-342–Cys-370, and Cys-353–Cys-357. A glycan (N-linked (GlcNAc...) asparagine) is linked at Asn-392. Positions 396–559 (MHDQDVDSCE…RACTDNPLEE (164 aa)) constitute an AMOP domain.

Belongs to the isthmin family. In terms of tissue distribution, expressed at high levels in the placenta and at moderate levels in the pancreas, kidney, heart, liver, lung, brain and skeletal muscle.

It is found in the secreted. This Homo sapiens (Human) protein is Isthmin-2 (ISM2).